The primary structure comprises 2202 residues: Nonribosomal peptide synthetase 5 (2202 aa).

Residues 58–443 (TYAQLDALSD…LLSYDKVDSA (386 aa)) are adenylation 1. The 77-residue stretch at 517-593 (ERGLGAVESV…NIAAAVVELS (77 aa)) folds into the Carrier 1 domain. The residue at position 554 (serine 554) is an O-(pantetheine 4'-phosphoryl)serine. The condensation 1 stretch occupies residues 625 to 918 (IAPMTDMQTR…INTLPLAINT (294 aa)). An adenylation 2 region spans residues 1105–1482 (TYREFGRMTE…EVQSTISKLA (378 aa)). Positions 1563-1643 (DLETDTQRVL…DLSLAIDELV (81 aa)) constitute a Carrier 2 domain. An O-(pantetheine 4'-phosphoryl)serine modification is found at serine 1602. The interval 1664-1952 (GQLPLSYLEK…FLDRLLLRIQ (289 aa)) is condensation 2. The tract at residues 2103-2129 (PVGLTPSHEGSAELTNGTNKTDSTTGQ) is disordered. Over residues 2115 to 2129 (ELTNGTNKTDSTTGQ) the composition is skewed to polar residues. Residues 2130–2202 (QELENNLTDV…LELATCAVII (73 aa)) form the Carrier 3 domain. Serine 2164 bears the O-(pantetheine 4'-phosphoryl)serine mark.

The protein belongs to the NRP synthetase family.

Functionally, nonribosomal peptide synthesis (NRPS) is a key mechanism responsible for the biosynthesis of bioactive metabolites which are potentially contributing to organismal virulence. The protein is Nonribosomal peptide synthetase 5 (NRPS5) of Aspergillus fumigatus (strain ATCC MYA-4609 / CBS 101355 / FGSC A1100 / Af293) (Neosartorya fumigata).